The following is a 249-amino-acid chain: 2,3-bisphosphoglycerate-dependent phosphoglycerate mutase (249 aa).

Residues 8–15, 21–22, Arg60, 87–90, Lys98, 114–115, and 183–184 each bind substrate; these read RHGQSAWN, TG, ERHY, RR, and GN. His9 functions as the Tele-phosphohistidine intermediate in the catalytic mechanism. The Proton donor/acceptor role is filled by Glu87. Positions 115-137 are disordered; it reads RSYDTPPPPLPADDPRSPAGDAR.

Belongs to the phosphoglycerate mutase family. BPG-dependent PGAM subfamily. In terms of assembly, homodimer.

It catalyses the reaction (2R)-2-phosphoglycerate = (2R)-3-phosphoglycerate. It participates in carbohydrate degradation; glycolysis; pyruvate from D-glyceraldehyde 3-phosphate: step 3/5. Its function is as follows. Catalyzes the interconversion of 2-phosphoglycerate and 3-phosphoglycerate. In Nitratidesulfovibrio vulgaris (strain DSM 19637 / Miyazaki F) (Desulfovibrio vulgaris), this protein is 2,3-bisphosphoglycerate-dependent phosphoglycerate mutase.